A 2554-amino-acid chain; its full sequence is Protein sevenless (2554 aa).

Over residues 1 to 10 (MTMFWQQNVD) the composition is skewed to polar residues. Residues 1–25 (MTMFWQQNVDHQSDEQDKQAKGAAP) are disordered. Topologically, residues 1-2123 (MTMFWQQNVD…AEPFVSPEKR (2123 aa)) are extracellular. Residues 11-20 (HQSDEQDKQA) show a composition bias toward basic and acidic residues. A glycan (N-linked (GlcNAc...) asparagine) is linked at Asn30. Residues 51–70 (NQQAPGTSSSSSNSQNASPS) are compositionally biased toward low complexity. A disordered region spans residues 51–75 (NQQAPGTSSSSSNSQNASPSKIVVR). Asn129 carries an N-linked (GlcNAc...) asparagine glycan. Residues 181–208 (SRPQSTMAHHPDDRDRDRDPSEEQHGVD) form a disordered region. Over residues 189–208 (HHPDDRDRDRDPSEEQHGVD) the composition is skewed to basic and acidic residues. Positions 440-533 (APVIEHLMGL…GFVQTHSARN (94 aa)) constitute a Fibronectin type-III 1 domain. 4 N-linked (GlcNAc...) asparagine glycosylation sites follow: Asn481, Asn505, Asn617, and Asn647. Positions 824 to 924 (AGGKPHSLKA…EPLAARTWPL (101 aa)) constitute a Fibronectin type-III 2 domain. Asn966 carries an N-linked (GlcNAc...) asparagine glycan. The LDL-receptor class B repeat unit spans residues 1010–1053 (GRVYWTDLARNCVVRMDPWSGSRELLPVFEANFLALDPRQGHLY). 2 Fibronectin type-III domains span residues 1202–1290 (LPDS…TPPV) and 1294–1397 (QPRR…VAPE). N-linked (GlcNAc...) asparagine glycosylation is found at Asn1228, Asn1313, Asn1353, Asn1550, Asn1557, Asn1639, Asn1725, Asn1756, Asn1804, Asn1889, Asn1947, and Asn2073. 3 consecutive Fibronectin type-III domains span residues 1801–1901 (PPRN…SFAE), 1902–1988 (LPEL…VYET), and 1995–2117 (QPGK…AEPF). Residues 2124 to 2147 (GSLVLAIIAPAAIVSSCVLALVLV) form a helical membrane-spanning segment. Residues 2148–2554 (RKVQKRRLRA…LYANEGVSRL (407 aa)) are Cytoplasmic-facing. The 277-residue stretch at 2209 to 2485 (LKLLRFLGSG…RCYNTLHAIS (277 aa)) folds into the Protein kinase domain. Residues 2215-2223 (LGSGAFGEV) and Lys2242 contribute to the ATP site. The active-site Proton acceptor is the Asp2343. Tyr2380 carries the post-translational modification Phosphotyrosine; by autocatalysis. The segment covering 2515 to 2527 (GQPLEEHREHNER) has biased composition (basic and acidic residues). Residues 2515–2534 (GQPLEEHREHNERPEDENLT) form a disordered region.

The protein belongs to the protein kinase superfamily. Tyr protein kinase family. Insulin receptor subfamily. In terms of assembly, may form a complex with drk and Sos. Binds the phosphotyrosine interaction domain (PID) of Dab.

Its subcellular location is the cell membrane. The catalysed reaction is L-tyrosyl-[protein] + ATP = O-phospho-L-tyrosyl-[protein] + ADP + H(+). Receptor for an extracellular signal required to instruct a cell to differentiate into an R7 photoreceptor. The ligand for sev is the boss (bride of sevenless) protein on the surface of the neighboring R8 cell. The sequence is that of Protein sevenless (sev) from Drosophila melanogaster (Fruit fly).